A 354-amino-acid chain; its full sequence is Sulfate/thiosulfate import ATP-binding protein CysA 2 (354 aa).

The ABC transporter domain maps to 3 to 237 (IHIQQVNKHF…PSNPFVYEFL (235 aa)). An ATP-binding site is contributed by 35-42 (GPSGSGKT).

It belongs to the ABC transporter superfamily. Sulfate/tungstate importer (TC 3.A.1.6) family. The complex is composed of two ATP-binding proteins (CysA), two transmembrane proteins (CysT and CysW) and a solute-binding protein (CysP).

The protein resides in the cell inner membrane. The catalysed reaction is sulfate(out) + ATP + H2O = sulfate(in) + ADP + phosphate + H(+). The enzyme catalyses thiosulfate(out) + ATP + H2O = thiosulfate(in) + ADP + phosphate + H(+). Part of the ABC transporter complex CysAWTP involved in sulfate/thiosulfate import. Responsible for energy coupling to the transport system. The sequence is that of Sulfate/thiosulfate import ATP-binding protein CysA 2 from Shewanella oneidensis (strain ATCC 700550 / JCM 31522 / CIP 106686 / LMG 19005 / NCIMB 14063 / MR-1).